Here is a 168-residue protein sequence, read N- to C-terminus: MQGLVEFVLSNFIFTLINLWIMYWVLKKFLFKPTTEYMEGRKKSIADSIQEAEMKNKEADESKAQYDMKLQDIKKERSQIIDEATKRAEKRGDEIIKAAEDEAEKVIERAMTEIQREKQKSLNEMKNEISQLAIAAATKVIEKDLDEGTHHKMIQQFIDEVGETKWQN.

The helical transmembrane segment at F7 to L26 threads the bilayer.

Belongs to the ATPase B chain family. In terms of assembly, F-type ATPases have 2 components, F(1) - the catalytic core - and F(0) - the membrane proton channel. F(1) has five subunits: alpha(3), beta(3), gamma(1), delta(1), epsilon(1). F(0) has three main subunits: a(1), b(2) and c(10-14). The alpha and beta chains form an alternating ring which encloses part of the gamma chain. F(1) is attached to F(0) by a central stalk formed by the gamma and epsilon chains, while a peripheral stalk is formed by the delta and b chains.

It localises to the cell membrane. In terms of biological role, f(1)F(0) ATP synthase produces ATP from ADP in the presence of a proton or sodium gradient. F-type ATPases consist of two structural domains, F(1) containing the extramembraneous catalytic core and F(0) containing the membrane proton channel, linked together by a central stalk and a peripheral stalk. During catalysis, ATP synthesis in the catalytic domain of F(1) is coupled via a rotary mechanism of the central stalk subunits to proton translocation. Functionally, component of the F(0) channel, it forms part of the peripheral stalk, linking F(1) to F(0). The polypeptide is ATP synthase subunit b (Alkaliphilus metalliredigens (strain QYMF)).